A 359-amino-acid polypeptide reads, in one-letter code: Pyruvate dehydrogenase E1 component subunit beta, mitochondrial (359 aa).

Residues 1–30 (MAVVAGLVRGPLRQASGLLKRRFHRSAPAA) constitute a mitochondrion transit peptide. Tyr-67 bears the Phosphotyrosine mark. Glu-89 contacts thiamine diphosphate. K(+) is bound by residues Ile-142, Ala-190, Ile-191, Asp-193, and Asn-195. Position 354 is an N6-acetyllysine (Lys-354).

Heterotetramer of two PDHA1 and two PDHB subunits. The heterotetramer interacts with DLAT, and is part of the multimeric pyruvate dehydrogenase complex that contains multiple copies of pyruvate dehydrogenase (E1), dihydrolipoamide acetyltransferase (DLAT, E2) and lipoamide dehydrogenase (DLD, E3). These subunits are bound to an inner core composed of about 48 DLAT and 12 PDHX molecules. Interacts with DLAT. The cofactor is thiamine diphosphate.

The protein localises to the mitochondrion matrix. It catalyses the reaction N(6)-[(R)-lipoyl]-L-lysyl-[protein] + pyruvate + H(+) = N(6)-[(R)-S(8)-acetyldihydrolipoyl]-L-lysyl-[protein] + CO2. In terms of biological role, the pyruvate dehydrogenase complex catalyzes the overall conversion of pyruvate to acetyl-CoA and CO(2), and thereby links the glycolytic pathway to the tricarboxylic cycle. The chain is Pyruvate dehydrogenase E1 component subunit beta, mitochondrial (Pdhb) from Mus musculus (Mouse).